Reading from the N-terminus, the 572-residue chain is Dihydroxy-acid dehydratase (572 aa).

Cysteine 57 lines the [2Fe-2S] cluster pocket. Aspartate 89 is a Mg(2+) binding site. Cysteine 130 contacts [2Fe-2S] cluster. 2 residues coordinate Mg(2+): aspartate 131 and lysine 132. N6-carboxylysine is present on lysine 132. Cysteine 202 lines the [2Fe-2S] cluster pocket. Glutamate 453 is a binding site for Mg(2+). Serine 479 functions as the Proton acceptor in the catalytic mechanism.

Belongs to the IlvD/Edd family. Homodimer. The cofactor is [2Fe-2S] cluster. Requires Mg(2+) as cofactor.

The enzyme catalyses (2R)-2,3-dihydroxy-3-methylbutanoate = 3-methyl-2-oxobutanoate + H2O. It catalyses the reaction (2R,3R)-2,3-dihydroxy-3-methylpentanoate = (S)-3-methyl-2-oxopentanoate + H2O. Its pathway is amino-acid biosynthesis; L-isoleucine biosynthesis; L-isoleucine from 2-oxobutanoate: step 3/4. It functions in the pathway amino-acid biosynthesis; L-valine biosynthesis; L-valine from pyruvate: step 3/4. Functions in the biosynthesis of branched-chain amino acids. Catalyzes the dehydration of (2R,3R)-2,3-dihydroxy-3-methylpentanoate (2,3-dihydroxy-3-methylvalerate) into 2-oxo-3-methylpentanoate (2-oxo-3-methylvalerate) and of (2R)-2,3-dihydroxy-3-methylbutanoate (2,3-dihydroxyisovalerate) into 2-oxo-3-methylbutanoate (2-oxoisovalerate), the penultimate precursor to L-isoleucine and L-valine, respectively. The chain is Dihydroxy-acid dehydratase from Streptococcus thermophilus (strain CNRZ 1066).